A 1146-amino-acid chain; its full sequence is Cell division cycle and apoptosis regulator protein 1 (1146 aa).

The interaction with AR stretch occupies residues 1-246 (MAQFGGQKNP…AQPQPQSLLQ (246 aa)). An interaction with GATA2 region spans residues 200–657 (QRIQTLPNQN…RALSSKGLKS (458 aa)). The interval 282 to 351 (IVSQPQPARR…RRERERSPRR (70 aa)) is disordered. 2 stretches are compositionally biased toward basic and acidic residues: residues 290-331 (RRLD…ERSP) and 338-349 (ERSPRRERERSP). The residue at position 453 (serine 453) is a Phosphoserine. A coiled-coil region spans residues 591–615 (KQQLVEKLQGERKKADGEQDEEEKD). The disordered stretch occupies residues 599–635 (QGERKKADGEQDEEEKDDGEVKEIATPTHWSKLDPKA). Positions 608-618 (EQDEEEKDDGE) are enriched in acidic residues. At threonine 624 the chain carries Phosphothreonine. In terms of domain architecture, SAP spans 633-667 (PKAMKVNDLRKELESRALSSKGLKSQLIARLTKQL). Residue lysine 634 forms a Glycyl lysine isopeptide (Lys-Gly) (interchain with G-Cter in ubiquitin) linkage. Residues 640–1146 (DLRKELESRA…EKSKENGSGV (507 aa)) form an interaction with GATA1 region. Phosphothreonine is present on threonine 664. 4 stretches are compositionally biased toward basic and acidic residues: residues 671-684 (EQKE…KSEK), 691-716 (DKKS…RQER), 793-814 (KEDK…KKEE), and 829-852 (SGDD…KDDS). Disordered regions lie at residues 671-716 (EQKE…RQER) and 793-912 (KEDK…KEKP). A phosphoserine mark is found at serine 682 and serine 694. Positions 853 to 884 (KDDDETEEDNNQDEYDPMEAEEAEDEDDDREE) are enriched in acidic residues. Threonine 858 is modified (phosphothreonine). Over residues 885 to 912 (EEVKRDDKRDVSRYCKDRPAKDKEKEKP) the composition is skewed to basic and acidic residues. Lysine 1008 is covalently cross-linked (Glycyl lysine isopeptide (Lys-Gly) (interchain with G-Cter in SUMO1); alternate). Residue lysine 1008 forms a Glycyl lysine isopeptide (Lys-Gly) (interchain with G-Cter in SUMO2); alternate linkage. Residues 1029 to 1110 (DVGSLLQKLE…LQFENQLNKT (82 aa)) are a coiled coil. Residues lysine 1063 and lysine 1131 each participate in a glycyl lysine isopeptide (Lys-Gly) (interchain with G-Cter in SUMO2) cross-link.

Directly interacts with ESR1, NR3C1 and p53/TP53. Interacts (via N-terminus) with CALCOCO1. Interacts with MED1 and GATA1. Interacts with AR and GATA2.

Its subcellular location is the cytoplasm. The protein localises to the perinuclear region. Functionally, associates with components of the Mediator and p160 coactivator complexes that play a role as intermediaries transducing regulatory signals from upstream transcriptional activator proteins to basal transcription machinery at the core promoter. Recruited to endogenous nuclear receptor target genes in response to the appropriate hormone. Also functions as a p53 coactivator. May thus play an important role in transcriptional regulation. May be involved in apoptosis signaling in the presence of the retinoid CD437. Apoptosis induction involves sequestration of 14-3-3 protein(s) and mediated altered expression of multiple cell cycle regulatory genes including MYC, CCNB1 and CDKN1A. Plays a role in cell cycle progression and/or cell proliferation. In association with CALCOCO1 enhances GATA1- and MED1-mediated transcriptional activation from the gamma-globin promoter during erythroid differentiation of K562 erythroleukemia cells. Can act as a both a coactivator and corepressor of AR-mediated transcription. Contributes to chromatin looping and AR transcription complex assembly by stabilizing AR-GATA2 association on chromatin and facilitating MED1 and RNA polymerase II recruitment to AR-binding sites. May play an important role in the growth and tumorigenesis of prostate cancer cells. This chain is Cell division cycle and apoptosis regulator protein 1 (Ccar1), found in Mus musculus (Mouse).